A 201-amino-acid polypeptide reads, in one-letter code: dTTP/UTP pyrophosphatase (201 aa).

D76 (proton acceptor) is an active-site residue.

The protein belongs to the Maf family. YhdE subfamily. The cofactor is a divalent metal cation.

It is found in the cytoplasm. The catalysed reaction is dTTP + H2O = dTMP + diphosphate + H(+). The enzyme catalyses UTP + H2O = UMP + diphosphate + H(+). Functionally, nucleoside triphosphate pyrophosphatase that hydrolyzes dTTP and UTP. May have a dual role in cell division arrest and in preventing the incorporation of modified nucleotides into cellular nucleic acids. The chain is dTTP/UTP pyrophosphatase from Neisseria meningitidis serogroup A / serotype 4A (strain DSM 15465 / Z2491).